Reading from the N-terminus, the 562-residue chain is NAD-dependent malic enzyme (562 aa).

Y101 (proton donor) is an active-site residue. R154 provides a ligand contact to NAD(+). K172 acts as the Proton acceptor in catalysis. E243, D244, and D267 together coordinate a divalent metal cation. NAD(+) contacts are provided by D267 and N415.

It belongs to the malic enzymes family. In terms of assembly, homotetramer. Mg(2+) is required as a cofactor. Mn(2+) serves as cofactor.

The catalysed reaction is (S)-malate + NAD(+) = pyruvate + CO2 + NADH. It catalyses the reaction oxaloacetate + H(+) = pyruvate + CO2. The sequence is that of NAD-dependent malic enzyme from Shewanella sp. (strain MR-4).